Reading from the N-terminus, the 347-residue chain is GMP reductase (347 aa).

Residue 108–131 (ADFEKTVQILALNPALNFVCIDVA) coordinates NADP(+). Residues Gly-181 and Gly-183 each contribute to the K(+) site. Cys-186 acts as the Thioimidate intermediate in catalysis. 216–239 (IVSDGGCTMPGDVAKAFGGGADFV) contributes to the NADP(+) binding site.

Belongs to the IMPDH/GMPR family. GuaC type 1 subfamily. As to quaternary structure, homotetramer.

It catalyses the reaction IMP + NH4(+) + NADP(+) = GMP + NADPH + 2 H(+). Its function is as follows. Catalyzes the irreversible NADPH-dependent deamination of GMP to IMP. It functions in the conversion of nucleobase, nucleoside and nucleotide derivatives of G to A nucleotides, and in maintaining the intracellular balance of A and G nucleotides. The protein is GMP reductase of Salmonella paratyphi A (strain ATCC 9150 / SARB42).